We begin with the raw amino-acid sequence, 431 residues long: MRKLRRLVHMVLFCPISKGLQSRLPGIKVKYLFLAWLSVFVGSWVVYMHYSSYSELCRGHVCRMIICDQYKKGIISGSACKDLCDERTLVFQQCLSSSPTQQVYSGRWRDREVIIKCGVEETLKADSNPDSPPRRELVLFDKPTRGTSMDEFKEMLGNFLKANLGEQVSLTALVSQILTMADVNNDGKVSLAEAKSIWALLHLNEILLMLSLREKEHTSQLLGHCGDLYVTEKIPHDSLYGSQIPGFLQTLLPSPVHRLVHQWCAPAWPRRAKIAIGLLEFVEEIFHGTYGSFFICDSSFKNIGYNEKYDFKVVDLRKVATEMTIRGFLKGRHCEQNSDCTFGSDCTAACDKLMKQCRNDVIQPNLAKACQLLQDYLLYGSPSDLREELQKQLRTCMTLSGLASQMEVHHSLILNNLKTLLWKKISNTKYS.

The Cytoplasmic segment spans residues methionine 1–lysine 30. A May mediate ER retention motif is present at residues arginine 5–arginine 6. Residues tyrosine 31–serine 51 form a helical membrane-spanning segment. At serine 52–serine 431 the chain is on the lumenal side. 2 disulfides stabilise this stretch: cysteine 57-cysteine 94 and cysteine 62-cysteine 117.

The protein belongs to the DIPK family. Among the many cysteines in the lumenal domain, most are probably involved in disulfide bonds.

The protein resides in the endoplasmic reticulum membrane. In Xenopus tropicalis (Western clawed frog), this protein is Divergent protein kinase domain 1B (dipk1b).